Here is a 61-residue protein sequence, read N- to C-terminus: Large ribosomal subunit protein uL29 (61 aa).

This sequence belongs to the universal ribosomal protein uL29 family.

The protein is Large ribosomal subunit protein uL29 of Nitratidesulfovibrio vulgaris (strain DSM 19637 / Miyazaki F) (Desulfovibrio vulgaris).